A 427-amino-acid polypeptide reads, in one-letter code: MSEEHQESYHSDNLIDLMNHTLTNDHLQLLKKLGEMAAKLRMNLFLVGGTVRDMLRGVPGGDLDLVIEGDALAFSQNVANVLGGKVKHHEPFATATWVGAENLKLDIVSARAESYAKPGALPTIRHSHITDDLARRDFSINAMAIHLHPASYGQLVDPFHGRHDLTNGLIRILHSQSFIDDPTRLLRGVRFVSRFNYRFEQKTANLALATQPALTNALANVSPERIVHELKLLCHETDPVSSFSKLEDLHVWQALLGLTFSSSSATHLSRLQEEQNGEPLHWFQAIATVGFLEDNWKASLVPFAITAMEQRFLQNIEDIQKRLTNMTRFSTDYLHKQLYQVPEEPLRFYALSSGEEMQKVLDLYLHQRKQLQPLLTGHDLMELGMKPSPLFKECLLLHECEQLKGTIENKQDALQFAREFFNHKQPL.

Gly49 to Arg52 serves as a coordination point for ATP. Mg(2+) contacts are provided by Asp62 and Asp64. ATP-binding positions include Arg136 to Asp137, Asn141, Asp181 to Arg190, Arg194, and Arg225.

Belongs to the tRNA nucleotidyltransferase/poly(A) polymerase family. It depends on Mg(2+) as a cofactor.

It catalyses the reaction a tRNA with a 3' CC end + ATP = a tRNA with a 3' CCA end + diphosphate. Its function is as follows. tRNA nucleotidyltransferase involved in the synthesis of the tRNA CCA terminus. Adds the terminal adenosine residue to tRNA. The polypeptide is A-adding tRNA nucleotidyltransferase (Halalkalibacterium halodurans (strain ATCC BAA-125 / DSM 18197 / FERM 7344 / JCM 9153 / C-125) (Bacillus halodurans)).